The chain runs to 366 residues: Ribosomal RNA large subunit methyltransferase M (366 aa).

S-adenosyl-L-methionine is bound by residues Ser-188, 221–224 (CPGG), Asp-240, Asp-260, and Asp-277. Lys-306 (proton acceptor) is an active-site residue.

Belongs to the class I-like SAM-binding methyltransferase superfamily. RNA methyltransferase RlmE family. RlmM subfamily. In terms of assembly, monomer.

It is found in the cytoplasm. The enzyme catalyses cytidine(2498) in 23S rRNA + S-adenosyl-L-methionine = 2'-O-methylcytidine(2498) in 23S rRNA + S-adenosyl-L-homocysteine + H(+). In terms of biological role, catalyzes the 2'-O-methylation at nucleotide C2498 in 23S rRNA. This chain is Ribosomal RNA large subunit methyltransferase M, found in Klebsiella pneumoniae subsp. pneumoniae (strain ATCC 700721 / MGH 78578).